The chain runs to 186 residues: Ribosome-recycling factor (186 aa).

The segment at 144 to 163 (EKDGVIGQDESRAQSERVQK) is disordered.

The protein belongs to the RRF family.

It is found in the cytoplasm. Responsible for the release of ribosomes from messenger RNA at the termination of protein biosynthesis. May increase the efficiency of translation by recycling ribosomes from one round of translation to another. The protein is Ribosome-recycling factor of Rhizobium etli (strain CIAT 652).